Consider the following 424-residue polypeptide: Protein ImpB (424 aa).

One can recognise a UmuC domain in the interval 2–189 (FALADINSFY…QPVGEVWGVG (188 aa)).

This sequence belongs to the DNA polymerase type-Y family.

In terms of biological role, involved in UV protection and mutation. The polypeptide is Protein ImpB (impB) (Salmonella typhimurium).